Here is a 462-residue protein sequence, read N- to C-terminus: MSKKIDQETIVNHFKNYGFVYQNSEIYNGLANAWDFGPLGSLIKNNLKNLWLKHFIYSKKEMHLIDTNIILNPLVWKASGHIDNFSDPLIDCKECKSRFRADKLILENTKEEINEQTDSDTLIKIISDNKIKCPNCKKSNWTEIRKFNLMFDTSIGVVDDKKDLVYLRPETAQGIFINFKNIQRTQRQKLPFGVGQIGKAFRNEITPGNFIFRTREFEQMEIEYFCDKKDSPKVFDNFLESIKTFLFKTLKIHENNIKIIDYPKEELAHYSSRTVDFLYNFPHGYSELWGLADRGEFDLTAHQNLSKKSLEYLNEETKEKFVPSVIEPSVGVERLLYAILIDAYDEEKIDEENNRVVLKLIPELAPYKFAVLPLSNKLNDKAEEIFNNLILSNICTYDSSGSIGKRYRRQDAIGTPYCITVDFDTLEDECVTIRDRDSMKQIRIKIKDIDLSKVQELFKNAK.

2 residues coordinate substrate: Arg100 and Glu170. ATP contacts are provided by residues 202–204 (RNE), 212–217 (FRTREF), 287–288 (EL), and 331–334 (GVER). 217-221 (FEQME) contacts substrate. 327-331 (EPSVG) contributes to the substrate binding site.

This sequence belongs to the class-II aminoacyl-tRNA synthetase family. In terms of assembly, homodimer.

It is found in the cytoplasm. The catalysed reaction is tRNA(Gly) + glycine + ATP = glycyl-tRNA(Gly) + AMP + diphosphate. Its function is as follows. Catalyzes the attachment of glycine to tRNA(Gly). The sequence is that of Glycine--tRNA ligase from Malacoplasma penetrans (strain HF-2) (Mycoplasma penetrans).